A 214-amino-acid chain; its full sequence is Probable transaldolase (214 aa).

The active-site Schiff-base intermediate with substrate is Lys83.

The protein belongs to the transaldolase family. Type 3B subfamily.

It localises to the cytoplasm. The catalysed reaction is D-sedoheptulose 7-phosphate + D-glyceraldehyde 3-phosphate = D-erythrose 4-phosphate + beta-D-fructose 6-phosphate. It participates in carbohydrate degradation; pentose phosphate pathway; D-glyceraldehyde 3-phosphate and beta-D-fructose 6-phosphate from D-ribose 5-phosphate and D-xylulose 5-phosphate (non-oxidative stage): step 2/3. Transaldolase is important for the balance of metabolites in the pentose-phosphate pathway. The sequence is that of Probable transaldolase from Carboxydothermus hydrogenoformans (strain ATCC BAA-161 / DSM 6008 / Z-2901).